Consider the following 348-residue polypeptide: Phosphoribosylformylglycinamidine cyclo-ligase (348 aa).

The protein belongs to the AIR synthase family.

It localises to the cytoplasm. The enzyme catalyses 2-formamido-N(1)-(5-O-phospho-beta-D-ribosyl)acetamidine + ATP = 5-amino-1-(5-phospho-beta-D-ribosyl)imidazole + ADP + phosphate + H(+). It participates in purine metabolism; IMP biosynthesis via de novo pathway; 5-amino-1-(5-phospho-D-ribosyl)imidazole from N(2)-formyl-N(1)-(5-phospho-D-ribosyl)glycinamide: step 2/2. The sequence is that of Phosphoribosylformylglycinamidine cyclo-ligase from Geotalea uraniireducens (strain Rf4) (Geobacter uraniireducens).